Reading from the N-terminus, the 448-residue chain is Carbamoyl phosphate synthase arginine-specific small chain (448 aa).

Residues 1 to 27 constitute a mitochondrion transit peptide; that stretch reads MFKNIARLASMARSAPRTTASFQTRFM. A Glutamine amidotransferase type-1 domain is found at 224–415; it reads HIAVIDCGVK…LGQVHQYRAA (192 aa). The active-site Nucleophile is Cys-304. Catalysis depends on residues His-388 and Glu-390.

Belongs to the CarA family. In terms of assembly, heterodimer composed of 2 chains; the small (or glutamine) chain promotes the hydrolysis of glutamine to ammonia, which is used by the large (or ammonia) chain to synthesize carbamoyl phosphate.

It localises to the mitochondrion matrix. It carries out the reaction hydrogencarbonate + L-glutamine + 2 ATP + H2O = carbamoyl phosphate + L-glutamate + 2 ADP + phosphate + 2 H(+). It catalyses the reaction L-glutamine + H2O = L-glutamate + NH4(+). The protein operates within amino-acid biosynthesis; L-arginine biosynthesis; carbamoyl phosphate from bicarbonate: step 1/1. Small subunit of the arginine-specific carbamoyl phosphate synthase (CPSase). CPSase catalyzes the formation of carbamoyl phosphate from the ammonia moiety of glutamine, carbonate, and phosphate donated by ATP, the first step of the arginine biosynthetic pathway. The small subunit (glutamine amidotransferase) binds and cleaves glutamine to supply the large subunit with the substrate ammonia. The protein is Carbamoyl phosphate synthase arginine-specific small chain (CPA1) of Yarrowia lipolytica (strain CLIB 122 / E 150) (Yeast).